Here is a 580-residue protein sequence, read N- to C-terminus: MVASLLCTVAVAVLAVAAVGGEAGVVEHTFVVHEMNVTHLCNTTKIFVVNGQLPGPTVDVTEGDTVVIHVVNKIPHGLTIHWHGVRQLRSCWADGAGFITECPIPPGSERTYRFNVTDQVGTLWWHAHVTCLRSTINGAFIIRPRDGKYPFPTPVKDVPIIIGEWWELDLVELDRRMRDGNFDDNPLSATINGKLGDLSNCSGIVEESFVLNVKHGESYLLRVINTAFFSEYYFKVAGHTFTVVGADGNYLTPFKTDMVTVAPGEAIDVLMVADAPPAHYHMIALANQPPEPDPQIPKYISRGLVRYTGVDANNNGLPVPMPIMPNQHNTMPSYYFHANLTGLMHPKHRRVPMHVDERIFIILGLGTICRGRNTTCKRQRSLETIEVATMNNVSFTHPNTTALLERYYDGTPEGVYTEDFPVRPPRPYNYTNPALIPPGPLEEVLEPTFKATKLKRFKYNTSVEIIFQSSTLLMSDSNPMHLHGYDVFLLAQGLGSFNAKRDIRKFNYHNPQLRNTILVPRGGWAAVRFITDNPGMWYLHCHFEFHIIMGMATAFIVEDGPTPETSLPPPPPEFKRCDAS.

Positions 1 to 23 (MVASLLCTVAVAVLAVAAVGGEA) are cleaved as a signal peptide. Plastocyanin-like domains lie at 31-147 (VVHE…PRDG) and 156-310 (KDVP…YTGV). Residues asparagine 36 and asparagine 42 are each glycosylated (N-linked (GlcNAc...) asparagine). Cu cation contacts are provided by histidine 81 and histidine 83. Asparagine 115 carries N-linked (GlcNAc...) asparagine glycosylation. The Cu cation site is built by histidine 126 and histidine 128. 7 N-linked (GlcNAc...) asparagine glycosylation sites follow: asparagine 200, asparagine 339, asparagine 373, asparagine 392, asparagine 399, asparagine 429, and asparagine 460. A Plastocyanin-like 3 domain is found at 419-561 (DFPVRPPRPY…ATAFIVEDGP (143 aa)). Residues asparagine 478, histidine 481, histidine 483, histidine 540, cysteine 541, histidine 542, histidine 546, and methionine 551 each coordinate Cu cation. The interval 560–580 (GPTPETSLPPPPPEFKRCDAS) is disordered.

It belongs to the multicopper oxidase family. The cofactor is Cu cation.

Its subcellular location is the secreted. It is found in the extracellular space. The protein localises to the apoplast. The enzyme catalyses 4 hydroquinone + O2 = 4 benzosemiquinone + 2 H2O. Lignin degradation and detoxification of lignin-derived products. In Oryza sativa subsp. japonica (Rice), this protein is Laccase-20 (LAC20).